Reading from the N-terminus, the 203-residue chain is tRNA (guanine-N(7)-)-methyltransferase (203 aa).

E34, E59, D86, and D107 together coordinate S-adenosyl-L-methionine. The active site involves D107. Substrate contacts are provided by residues K111, D143, and T181–E184.

Belongs to the class I-like SAM-binding methyltransferase superfamily. TrmB family.

The enzyme catalyses guanosine(46) in tRNA + S-adenosyl-L-methionine = N(7)-methylguanosine(46) in tRNA + S-adenosyl-L-homocysteine. Its pathway is tRNA modification; N(7)-methylguanine-tRNA biosynthesis. Functionally, catalyzes the formation of N(7)-methylguanine at position 46 (m7G46) in tRNA. This Mycoplasmopsis pulmonis (strain UAB CTIP) (Mycoplasma pulmonis) protein is tRNA (guanine-N(7)-)-methyltransferase.